The primary structure comprises 319 residues: Olfactory receptor 8U3 (319 aa).

Over 1–25 the chain is Extracellular; it reads MAEVNISYVSEFILKGITDRPELQA. Asparagine 5 carries N-linked (GlcNAc...) asparagine glycosylation. A helical membrane pass occupies residues 26-46; the sequence is PCFVMFLTIYLVTVLGNLGLI. The Cytoplasmic segment spans residues 47–54; it reads VIIRVDSR. Residues 55–75 form a helical membrane-spanning segment; the sequence is LHTPMYFFLSHLAFVDLCYSS. At 76–99 the chain is on the extracellular side; that stretch reads AITPKMMVNFVVERNTIPFHACAT. Residues cysteine 97 and cysteine 189 are joined by a disulfide bond. The helical transmembrane segment at 100 to 120 threads the bilayer; the sequence is QLGCFLTFMITECFLLASMAY. Topologically, residues 121–133 are cytoplasmic; that stretch reads DRYVAICSPLHYS. The chain crosses the membrane as a helical span at residues 134 to 154; the sequence is TLMSKRVCIQLVAVPYVYSFL. Residues 155–196 are Extracellular-facing; sequence VALFHTIITFRLTYCGPNVINHFYCDDLPLLALSCSDTHMKE. Residues 197–217 form a helical membrane-spanning segment; it reads ILIFAFAGFDMICSSSIVLTS. Residues 218–237 lie on the Cytoplasmic side of the membrane; that stretch reads YLFIIAAILRIRSTQGRRKA. Residues 238-258 form a helical membrane-spanning segment; sequence ISTCGSHMVAVTIFYGTLIFM. Residues 259 to 271 lie on the Extracellular side of the membrane; that stretch reads YLQPKSNHSLDTD. A glycan (N-linked (GlcNAc...) asparagine) is linked at asparagine 265. The chain crosses the membrane as a helical span at residues 272–292; that stretch reads KMASVFYTVVIPMLNPLIYSL. The Cytoplasmic segment spans residues 293–319; it reads RNKEVKDASKKALDKGYETLKILRLSK.

The protein belongs to the G-protein coupled receptor 1 family.

It is found in the cell membrane. Its function is as follows. Potential odorant receptor. The sequence is that of Olfactory receptor 8U3 from Mus musculus (Mouse).